The following is a 466-amino-acid chain: Arginine biosynthesis bifunctional protein ArgJ, mitochondrial (466 aa).

6 residues coordinate substrate: Thr-194, Lys-223, Thr-234, Glu-321, Asn-461, and Thr-466. Thr-234 (nucleophile) is an active-site residue.

Belongs to the ArgJ family. As to quaternary structure, heterodimer of an alpha and a beta chain. The alpha and beta chains are autoproteolytically processed from a single precursor protein within the mitochondrion.

It localises to the mitochondrion matrix. The enzyme catalyses N(2)-acetyl-L-ornithine + L-glutamate = N-acetyl-L-glutamate + L-ornithine. The catalysed reaction is L-glutamate + acetyl-CoA = N-acetyl-L-glutamate + CoA + H(+). The protein operates within amino-acid biosynthesis; L-arginine biosynthesis; L-ornithine and N-acetyl-L-glutamate from L-glutamate and N(2)-acetyl-L-ornithine (cyclic): step 1/1. Its pathway is amino-acid biosynthesis; L-arginine biosynthesis; N(2)-acetyl-L-ornithine from L-glutamate: step 1/4. Catalyzes two activities which are involved in the cyclic version of arginine biosynthesis: the synthesis of acetylglutamate from glutamate and acetyl-CoA, and of ornithine by transacetylation between acetylornithine and glutamate. In Aspergillus flavus (strain ATCC 200026 / FGSC A1120 / IAM 13836 / NRRL 3357 / JCM 12722 / SRRC 167), this protein is Arginine biosynthesis bifunctional protein ArgJ, mitochondrial.